Reading from the N-terminus, the 263-residue chain is Proline rich transmembrane protein 1B (263 aa).

The span at 1–17 (MEAGAGGAGSDTKGGGS) shows a compositional bias: gly residues. Residues 1–107 (MEAGAGGAGS…IGFVGEPPPY (107 aa)) form a disordered region. Low complexity-rich tracts occupy residues 37–47 (QMPAQPALPQL) and 75–86 (DAPAQAAGEAGP). Helical transmembrane passes span 190–210 (MMES…IAIV) and 238–258 (VLFS…YVVV).

The protein belongs to the CD225/Dispanin family.

The protein localises to the membrane. This Homo sapiens (Human) protein is Proline rich transmembrane protein 1B.